Reading from the N-terminus, the 350-residue chain is MGVTSTAPHLLRAARGEIVDRPPVWMMRQAGRYMKAYRDLREKYPSFRDRSEIPEVAIEVSLQPWKAFQPDGVILFSDIVTPLPGLGIEMDIAEGKGPIIHAPIRTQAQIEQLRPLEPEAALPFIKTILQALRQEVGNQSTVLGFVGAPWTLAAYAVEGKGSKTYSIIKNMAFSDPTILHQLLSKLADAIAIYARYQIDSGAQVVQMFDSWAGQLSPQDYDTFALPYQQRVFQQIKQTHPDTPLILLVSGSAGVLERMGQSGADIVTVDWTVDMADARARLGKQMKVQGNLDPGVLYASKQFIRDRIIDTVRKAGNWGHILNLGHGVLPDTPEENVAFFFETAKQLNVLV.

Residues 28–32 (RQAGR), Phe47, Asp78, Tyr155, Ser210, and His325 contribute to the substrate site.

This sequence belongs to the uroporphyrinogen decarboxylase family. In terms of assembly, homodimer.

The protein localises to the cytoplasm. It catalyses the reaction uroporphyrinogen III + 4 H(+) = coproporphyrinogen III + 4 CO2. The protein operates within porphyrin-containing compound metabolism; protoporphyrin-IX biosynthesis; coproporphyrinogen-III from 5-aminolevulinate: step 4/4. In terms of biological role, catalyzes the decarboxylation of four acetate groups of uroporphyrinogen-III to yield coproporphyrinogen-III. This Nostoc sp. (strain PCC 7120 / SAG 25.82 / UTEX 2576) protein is Uroporphyrinogen decarboxylase.